The following is a 573-amino-acid chain: Putative ABC transporter ATP-binding protein LJ_1704 (573 aa).

2 consecutive ABC transporter domains span residues 6-247 (IEFK…GVRE) and 303-536 (LKLD…ASLK). ATP contacts are provided by residues 40–47 (GPSGSGKS) and 337–344 (GQNGAGKT).

Belongs to the ABC transporter superfamily.

It localises to the cell membrane. Functionally, probably part of an ABC transporter complex. Responsible for energy coupling to the transport system. The polypeptide is Putative ABC transporter ATP-binding protein LJ_1704 (Lactobacillus johnsonii (strain CNCM I-12250 / La1 / NCC 533)).